The chain runs to 447 residues: RNA-binding protein 208 (447 aa).

RRM domains lie at Arg-73 to Ala-147 and Phe-158 to Lys-236. Residues Thr-254–Thr-269 show a composition bias toward polar residues. 2 disordered regions span residues Thr-254 to Pro-279 and Trp-353 to Pro-372. One can recognise an RRM 3 domain in the interval Thr-282–Lys-356.

As to quaternary structure, interacts with RBP-P.

In terms of biological role, RNA-binding protein. This is RNA-binding protein 208 from Oryza sativa subsp. japonica (Rice).